The following is a 610-amino-acid chain: UvrABC system protein C (610 aa).

The 79-residue stretch at 16-94 (SQPGVYSMYD…IKLYQPRYNV (79 aa)) folds into the GIY-YIG domain. The region spanning 204 to 239 (QQVLNQLVERMELASRALNFEDAAHARDQIQAVRRV) is the UVR domain.

It belongs to the UvrC family. In terms of assembly, interacts with UvrB in an incision complex.

Its subcellular location is the cytoplasm. Its function is as follows. The UvrABC repair system catalyzes the recognition and processing of DNA lesions. UvrC both incises the 5' and 3' sides of the lesion. The N-terminal half is responsible for the 3' incision and the C-terminal half is responsible for the 5' incision. This Sodalis glossinidius (strain morsitans) protein is UvrABC system protein C.